Here is a 1062-residue protein sequence, read N- to C-terminus: Inversin (1062 aa).

ANK repeat units lie at residues 13–42, 47–76, 80–110, 113–144, 148–177, 181–213, 220–250, 254–283, 288–317, 321–350, 356–385, 389–418, 422–451, 455–484, 488–517, and 523–553; these read SLAS…ALRD, FGRT…DVNK, SRRT…WMQK, EEMT…EVDT, NKQT…NIGI, EGKI…TESL, EGRT…NITS, LFRT…SGTI, QGAT…VKDD, EGRT…DIDI, YGGT…QVDA, MKHT…RVDL, DGHS…NPNV, AGRT…DPNI, EGRT…FPNQ, and ERYT…SIAA. Asparagine 75 carries the post-translational modification 3-hydroxyasparagine. The D-box 1 motif lies at 490–498; the sequence is RTALHWSCN. Residues 555–584 form the IQ 1 domain; it reads QDIAAFKIQAVYKGYKVRKAFRDRKNLLMK. Basic and acidic residues predominate over residues 589–608; that stretch reads RKDAAAKKREEENKRKEAEQ. Positions 589–849 are disordered; it reads RKDAAAKKRE…QDKLIGGVSS (261 aa). 2 stretches are compositionally biased toward polar residues: residues 636-658 and 676-689; these read QNEG…TVQS and QGDS…TASR. Over residues 690–700 the composition is skewed to basic and acidic residues; the sequence is KPSETPIEHCR. Residues 713 to 724 show a composition bias toward polar residues; sequence GGNSSKNQGTSS. 2 stretches are compositionally biased toward basic and acidic residues: residues 725–741 and 775–788; these read VEKR…RCEE and DHPR…DRAA. The D-box 2 motif lies at 907-915; it reads RKELFRRKN. Residues 914–943 enclose the IQ 2 domain; it reads KNKAAAVIQRAWRSYQLRKHLSRLLHLKQL. The tract at residues 1042 to 1062 is disordered; that stretch reads RSKKFSYNLQPSSQSKNKPKL. Positions 1046–1062 are enriched in polar residues; the sequence is FSYNLQPSSQSKNKPKL.

In terms of assembly, interacts with microtubules. Interacts with NPHP1. Interacts with DVL1, PRICKLE (PRICKLE1 or PRICKLE2) and Strabismus (VANGL1 or VANGL2). Binds calmodulin via its IQ domains. Interacts with APC2. Interacts with alpha-, beta-, and gamma-catenin. Interacts with N-cadherin (CDH2). Interacts with NPHP3. Interacts with IQCB1; the interaction likely requires additional interactors. Component of a complex containing at least ANKS6, INVS, NEK8 and NPHP3. ANKS6 may organize complex assembly by linking INVS and NPHP3 to NEK8 and INVS may target the complex to the proximal ciliary axoneme. In terms of processing, may be ubiquitinated via its interaction with APC2. Post-translationally, hydroxylated at Asn-75, most probably by HIF1AN. Strongly expressed in the primary cilia of renal cells, especially in the varicosities, swellings observed in the cilia. Localizes in the node monocilia and in other 9+0 monocilia, including those of kidney epithelial cells and the pituitary gland, but it does not localize to 9+2 cilia (at protein level). In adult, it is expressed at high level in liver and kidney. Weakly or not expressed in other tissues.

It is found in the cytoplasm. It localises to the cytoskeleton. The protein localises to the membrane. The protein resides in the nucleus. Its subcellular location is the perinuclear region. It is found in the spindle. In terms of biological role, required for normal renal development and establishment of left-right axis. Probably acts as a molecular switch between different Wnt signaling pathways. Inhibits the canonical Wnt pathway by targeting cytoplasmic disheveled (DVL1) for degradation by the ubiquitin-proteasome. This suggests that it is required in renal development to oppose the repression of terminal differentiation of tubular epithelial cells by Wnt signaling. Involved in the organization of apical junctions in kidney cells together with NPHP1, NPHP4 and RPGRIP1L/NPHP8. Does not seem to be strictly required for ciliogenesis. The protein is Inversin (Invs) of Mus musculus (Mouse).